The following is a 213-amino-acid chain: Glycerol-3-phosphate acyltransferase (213 aa).

The next 6 helical transmembrane spans lie at 2–22 (ITIV…GLWI), 54–74 (MATF…PIMF), 80–100 (SPLI…FAGF), 110–130 (AGVV…VFFG), 143–163 (VTAS…GFIL), and 165–185 (NYDP…IIRH).

This sequence belongs to the PlsY family. Probably interacts with PlsX.

It is found in the cell membrane. It carries out the reaction an acyl phosphate + sn-glycerol 3-phosphate = a 1-acyl-sn-glycero-3-phosphate + phosphate. The protein operates within lipid metabolism; phospholipid metabolism. In terms of biological role, catalyzes the transfer of an acyl group from acyl-phosphate (acyl-PO(4)) to glycerol-3-phosphate (G3P) to form lysophosphatidic acid (LPA). This enzyme utilizes acyl-phosphate as fatty acyl donor, but not acyl-CoA or acyl-ACP. In Streptococcus pneumoniae (strain Taiwan19F-14), this protein is Glycerol-3-phosphate acyltransferase.